Here is a 118-residue protein sequence, read N- to C-terminus: Vesicle-associated membrane protein 1 (118 aa).

The segment covering 1–15 (MSAPAQPPTEGAEGA) has biased composition (low complexity). Positions 1–36 (MSAPAQPPTEGAEGAAPGGGPPGPPPNMTSNRRLQQ) are disordered. Residues 1–96 (MSAPAQPPTE…KRKYWWKNCK (96 aa)) are Cytoplasmic-facing. The v-SNARE coiled-coil homology domain maps to 33-93 (RLQQTQAQVE…AKLKRKYWWK (61 aa)). Phosphoserine is present on Ser-63. A helical; Anchor for type IV membrane protein membrane pass occupies residues 97–116 (MMIMLGAICAIIVVVIVIYF). The Vesicular portion of the chain corresponds to 117–118 (FA).

It belongs to the synaptobrevin family. Interacts with VAPA and VAPB.

Its subcellular location is the cytoplasmic vesicle. The protein localises to the secretory vesicle. The protein resides in the synaptic vesicle membrane. It localises to the synapse. It is found in the synaptosome. Its subcellular location is the cytoplasmic vesicle membrane. Its function is as follows. Involved in the targeting and/or fusion of transport vesicles to their target membrane. The sequence is that of Vesicle-associated membrane protein 1 (VAMP1) from Bos taurus (Bovine).